Consider the following 149-residue polypeptide: D-aminoacyl-tRNA deacylase (149 aa).

The Gly-cisPro motif, important for rejection of L-amino acids motif lies at 139-140; that stretch reads GP.

It belongs to the DTD family. In terms of assembly, homodimer.

It localises to the cytoplasm. It carries out the reaction glycyl-tRNA(Ala) + H2O = tRNA(Ala) + glycine + H(+). It catalyses the reaction a D-aminoacyl-tRNA + H2O = a tRNA + a D-alpha-amino acid + H(+). In terms of biological role, an aminoacyl-tRNA editing enzyme that deacylates mischarged D-aminoacyl-tRNAs. Also deacylates mischarged glycyl-tRNA(Ala), protecting cells against glycine mischarging by AlaRS. Acts via tRNA-based rather than protein-based catalysis; rejects L-amino acids rather than detecting D-amino acids in the active site. By recycling D-aminoacyl-tRNA to D-amino acids and free tRNA molecules, this enzyme counteracts the toxicity associated with the formation of D-aminoacyl-tRNA entities in vivo and helps enforce protein L-homochirality. The protein is D-aminoacyl-tRNA deacylase (DTD1) of Candida glabrata (strain ATCC 2001 / BCRC 20586 / JCM 3761 / NBRC 0622 / NRRL Y-65 / CBS 138) (Yeast).